Reading from the N-terminus, the 2167-residue chain is SH3 and multiple ankyrin repeat domains protein 1 (2167 aa).

The tract at residues 1 to 63 (MTHSPATSED…TRGLQGRSMS (63 aa)) is disordered. Residues 17-32 (SECPEGGSESDSSPDG) are compositionally biased toward low complexity. The segment covering 33-47 (PGRGPQGTRGRGSGA) has biased composition (gly residues). Arg43 is subject to Omega-N-methylarginine. The residue at position 186 (Tyr186) is a Phosphotyrosine. 7 ANK repeats span residues 195–210 (VARL…YHDS), 212–245 (SGET…FRAR), 246–278 (DGMT…YKDR), 279–312 (RGLT…IADE), 313–345 (NGWQ…AQNA), 346–378 (SGNT…VKNN), and 379–395 (NGQT…NFEL). Disordered stretches follow at residues 413–432 (SPKY…TVPP) and 453–546 (APGA…SRGR). The segment covering 453–479 (APGASSSGTPGPTSGPQGQSQPSAPST) has biased composition (low complexity). Positions 527–542 (PAGGTGGSGGPGGSLG) are enriched in gly residues. Ser540 bears the Phosphoserine mark. Arg544 carries the omega-N-methylarginine modification. The region spanning 554–613 (VPGRSFMAVKSYQAQGEGEISLSKGEKIKVLSIGEGGFWEGQVKGRVGWFPSDCLEEVAN) is the SH3 domain. Ser638, Ser641, Ser671, and Ser791 each carry phosphoserine. One can recognise a PDZ domain in the interval 663-757 (TVLLQKKDSE…TLMVKVVMVT (95 aa)). The tract at residues 841–894 (ISASESPGPGGLASLGKHRPKGFFATESSFDPHHRSQPSYDRPSFLPPGPGLML) is disordered. Ser898 carries the post-translational modification Phosphoserine. 8 disordered regions span residues 917-1233 (SRSL…LDFT), 1245-1294 (RREG…SIDE), 1308-1417 (GGSS…VLRL), 1429-1725 (RAGL…AGVA), 1740-1787 (GQAF…DPVT), 1842-1866 (KLLP…QPQA), 1898-1988 (PWAR…STRH), and 2002-2029 (RRAP…LPIL). Residues 928–947 (IPPPPTTSPPEPPYSTPPAP) show a composition bias toward pro residues. Arg958 bears the Omega-N-methylarginine mark. Residues 964 to 980 (PSSGGPLPASSPSSFDG) show a composition bias toward low complexity. Residues 1004–1028 (AHHHPPHHHHHHAPPPQPHHHHAHP) show a composition bias toward basic residues. Residue Arg1059 is modified to Omega-N-methylarginine. Positions 1064–1085 (SPTSGAPSPSHHSSSGGSSGPT) are enriched in low complexity. Residues Arg1098 and Arg1109 each carry the omega-N-methylarginine modification. Composition is skewed to low complexity over residues 1132–1146 (SIPS…ALPR) and 1171–1184 (STSS…GSST). Positions 1203–1224 (SPAPATSPVPPSPSPVPTPASP) are enriched in pro residues. A compositionally biased stretch (basic and acidic residues) spans 1245–1256 (RREGGWQNEARR). The residue at position 1257 (Arg1257) is an Asymmetric dimethylarginine. Position 1291 is a phosphoserine (Ser1291). Over residues 1363–1372 (ARERALKESS) the composition is skewed to basic and acidic residues. Residues 1378–1395 (PQPPPRPPSPRYDAPPPT) are compositionally biased toward pro residues. Positions 1396-1408 (LHHHSPHSPHSPH) are enriched in basic residues. Omega-N-methylarginine is present on Arg1429. Ser1442 carries the post-translational modification Phosphoserine. Low complexity-rich tracts occupy residues 1459-1469 (PGVGPLLLQLG) and 1530-1541 (RRVLPTSPTSPR). Over residues 1589–1615 (PLTPGPPHPLPDPPSPATPLPAAPPPA) the composition is skewed to pro residues. Residues 1624–1641 (DSTASSLTSYDSEVATLT) are compositionally biased toward polar residues. Pro residues predominate over residues 1648–1676 (PGDPPAPGPPAPAAPAPPAPQPGPDPPPG). Basic and acidic residues predominate over residues 1684–1694 (VDSRSSSDHPL). Residues 1695–1708 (ETISSASTLSSLSA) show a composition bias toward low complexity. Residues 1709–1724 (EGGGNTGGVAGGGAGV) show a composition bias toward gly residues. A compositionally biased stretch (pro residues) spans 1850–1861 (PGPPPPPLPGPL). An Omega-N-methylarginine modification is found at Arg1901. Low complexity-rich tracts occupy residues 1934 to 1945 (SQTSLLSKPSSS), 1960 to 1985 (TGSG…ASAS), and 2002 to 2012 (RRAPSPSLLPA). Omega-N-methylarginine is present on residues Arg2022, Arg2042, and Arg2080. The 64-residue stretch at 2104–2167 (WTKFDVADWL…DRALKFFLER (64 aa)) folds into the SAM domain.

The protein belongs to the SHANK family. May homomultimerize via its SAM domain. Interacts with the C-terminus of SSTR2 via the PDZ domain. Interacts with SHARPIN, SPTAN1 and DLGAP1/GKAP. Part of a complex with DLG4/PSD-95 and DLGAP1/GKAP. Interacts with BAIAP2. Interacts with IGSF9. Interacts with HOMER1 and HOMER3. Expressed only in brain (neuropil of cortex, CA1 region hippocampus and molecular layer of cerebellum).

Its subcellular location is the cytoplasm. It localises to the synapse. The protein localises to the postsynaptic density. Seems to be an adapter protein in the postsynaptic density (PSD) of excitatory synapses that interconnects receptors of the postsynaptic membrane including NMDA-type and metabotropic glutamate receptors, and the actin-based cytoskeleton. Plays a role in the structural and functional organization of the dendritic spine and synaptic junction. Overexpression promotes maturation of dendritic spines and the enlargement of spine heads via its ability to recruit Homer to postsynaptic sites, and enhances presynaptic function. This Rattus norvegicus (Rat) protein is SH3 and multiple ankyrin repeat domains protein 1 (Shank1).